The following is a 655-amino-acid chain: p-hydroxybenzoic acid efflux pump subunit AaeB (655 aa).

The next 11 helical transmembrane spans lie at 13 to 33 (FAVK…HFQL), 38 to 58 (WAVL…GGEP), 69 to 89 (LRII…IAMI), 93 to 113 (LLMI…SSLV), 121 to 141 (WGLA…EPLL), 152 to 172 (EIVI…PRSI), 370 to 390 (LFWL…IAVV), 407 to 427 (FIYG…VIIP), 431 to 451 (QSML…GIEV), 459 to 479 (MGAL…TFHF), and 482 to 502 (FLDS…VILL).

It belongs to the aromatic acid exporter ArAE (TC 2.A.85) family.

It is found in the cell inner membrane. Forms an efflux pump with AaeA. Could function as a metabolic relief valve, allowing to eliminate certain compounds when they accumulate to high levels in the cell. The protein is p-hydroxybenzoic acid efflux pump subunit AaeB of Escherichia coli (strain SMS-3-5 / SECEC).